The chain runs to 446 residues: Probable tRNA modification GTPase MnmE (446 aa).

Residues arginine 28, glutamate 87, and arginine 126 each contribute to the (6S)-5-formyl-5,6,7,8-tetrahydrofolate site. Residues 218–373 enclose the TrmE-type G domain; sequence GIQVALLGPA…LKQLIWQQAT (156 aa). K(+) is bound at residue asparagine 228. GTP-binding positions include 228–233, 247–253, and 272–275; these read NAGKST, TPIAGTT, and DTAG. Serine 232 is a Mg(2+) binding site. K(+)-binding residues include threonine 247, isoleucine 249, and threonine 252. Threonine 253 provides a ligand contact to Mg(2+). Position 446 (lysine 446) interacts with (6S)-5-formyl-5,6,7,8-tetrahydrofolate.

It belongs to the TRAFAC class TrmE-Era-EngA-EngB-Septin-like GTPase superfamily. TrmE GTPase family. It depends on K(+) as a cofactor.

The protein localises to the plastid. It localises to the chloroplast. In terms of biological role, exhibits a very high intrinsic GTPase hydrolysis rate. Involved in the addition of a carboxymethylaminomethyl (cmnm) group at the wobble position (U34) of certain tRNAs, forming tRNA-cmnm(5)s(2)U34. The polypeptide is Probable tRNA modification GTPase MnmE (Cyanidioschyzon merolae (strain NIES-3377 / 10D) (Unicellular red alga)).